The chain runs to 478 residues: Solute carrier family 49 member 4 (478 aa).

The interval 1 to 27 is disordered; the sequence is MGSGWSSEEEERQPLLGPGLGPAPGAT. Residues 1–51 are Cytoplasmic-facing; that stretch reads MGSGWSSEEEERQPLLGPGLGPAPGATRRGREAAAVLPAAGPSPGRVYGRR. The short motif at 15–16 is the Di-leucine motif; mediates lysosomal localization element; that stretch reads LL. Residues 52–72 traverse the membrane as a helical segment; the sequence is WLVLLLFSLLAFAQGLVWNTW. Over 73–89 the chain is Lumenal; it reads GPIQNSARQAYSFTGWD. The chain crosses the membrane as a helical span at residues 90-110; that stretch reads IALLVLWGPIGFLPCFAFMWL. Topologically, residues 111 to 117 are cytoplasmic; it reads LDKRGLR. A helical membrane pass occupies residues 118-138; it reads ITVLLTSFLMVLGTGLRCIPV. The Lumenal segment spans residues 139–152; that stretch reads SDLTLKKRLIHGGQ. The helical transmembrane segment at 153 to 173 threads the bilayer; it reads ILNGLAGPTVMNAAPFLSTTW. At 174–184 the chain is on the cytoplasmic side; it reads FSADERATATA. The helical transmembrane segment at 185–205 threads the bilayer; that stretch reads IASMLSYLGGACAFLVGPLVV. Topologically, residues 206–229 are lumenal; sequence PAPNGTAPLLTAESSRDHIKDRIE. The N-linked (GlcNAc...) asparagine glycan is linked to asparagine 209. Residues 230–250 traverse the membrane as a helical segment; that stretch reads TVLYAEFGVVCLIFSATLAYF. Over 251 to 281 the chain is Cytoplasmic; the sequence is PPRPPLPPSVAAASQRLSYRRSFCRLLSNLR. Residues 282 to 302 traverse the membrane as a helical segment; the sequence is FLMIALAYAIPLGVFAGWSGV. Over 303-314 the chain is Lumenal; it reads LDLILTPVHVSQ. A helical transmembrane segment spans residues 315–335; it reads VDAGWIGFWSIVGGCVVGIAM. The Cytoplasmic portion of the chain corresponds to 336-347; the sequence is ARFADFIRGMLK. The helical transmembrane segment at 348 to 368 threads the bilayer; it reads LILLLLFSGATLSSTWFTLTC. Topologically, residues 369–384 are lumenal; that stretch reads LNSVTHLPLTTVTLYA. A helical membrane pass occupies residues 385-405; the sequence is SCILLGVFLNSSVPIFFELFV. The Cytoplasmic segment spans residues 406 to 414; it reads ETVYPVPEG. The chain crosses the membrane as a helical span at residues 415–435; it reads ITCGVVTFLSNMFMGVLLFFV. The Lumenal segment spans residues 436 to 442; it reads TFYHTEL. A helical transmembrane segment spans residues 443–463; it reads SWFNWCLPGSCLLSLLLILCF. Over 464-478 the chain is Cytoplasmic; it reads RESYDRLYLDVVVSV.

This sequence belongs to the major facilitator superfamily. Post-translationally, cleaved in lysosomes by cathepsin L between Leu-214 and Ala-261, generating a N-glycosylated N-terminal and a non-glycosylated C-terminal fragment.

The protein resides in the lysosome membrane. It carries out the reaction pyridoxine(out) + n H(+)(out) = pyridoxine(in) + n H(+)(in). Its function is as follows. Mediates H(+)-dependent pyridoxine transport. This is Solute carrier family 49 member 4 (Slc49a4) from Rattus norvegicus (Rat).